The sequence spans 417 residues: Phosphatidylcholine:ceramide cholinephosphotransferase 1 (417 aa).

The SAM domain occupies 11-74 (WSPEEVTNWL…LHMIETLKMA (64 aa)). A run of 5 helical transmembrane segments spans residues 140 to 160 (FLAF…ISVV), 188 to 208 (FSIC…QWLL), 219 to 239 (FFCI…VTTL), 280 to 300 (MCGD…YLFI), and 308 to 328 (LWWY…CILL). Residue histidine 289 is part of the active site. At 329-417 (AHDHYTVDVV…VKYSRLVNDT (89 aa)) the chain is on the cytoplasmic side. Active-site residues include histidine 332 and aspartate 336.

Belongs to the sphingomyelin synthase family.

Its subcellular location is the golgi apparatus membrane. The catalysed reaction is an N-acylsphing-4-enine + a 1,2-diacyl-sn-glycero-3-phosphocholine = a sphingomyelin + a 1,2-diacyl-sn-glycerol. The enzyme catalyses an N-acylsphing-4-enine + a 1,2-diacyl-sn-glycero-3-phosphoethanolamine = an N-acylsphing-4-enine 1-phosphoethanolamine + a 1,2-diacyl-sn-glycerol. Its function is as follows. Major sphingomyelin synthase at the Golgi apparatus. Catalyzes the reversible transfer of phosphocholine moiety in sphingomyelin biosynthesis: in the forward reaction transfers phosphocholine head group of phosphatidylcholine (PC) on to ceramide (CER) to form ceramide phosphocholine (sphingomyelin, SM) and diacylglycerol (DAG) as by-product, and in the reverse reaction transfers phosphocholine from SM to DAG to form PC and CER. The direction of the reaction depends on the levels of CER and DAG in Golgi membranes. Converts the newly synthesized CER, that is transported from the endoplasmic reticulum to the trans-Golgi by the Cer transport protein (CERT), to SM. Can form a heteromeric complex with glucosylceramide synthase (GCS) increasing SMS activity and reducing glucosylceramide synthesis, a critical mechanism that controls the metabolic fate of CER in the Golgi. Does not use free phosphorylcholine or CDP-choline as donor. Can also transfer phosphoethanolamine head group of phosphatidylethanolamine (PE) on to CER to form ceramide phosphoethanolamine (CPE). Regulates receptor-mediated signal transduction via mitogenic DAG and proapoptotic CER, as well as via SM, a structural component of membrane rafts that serve as platforms for signal transduction and protein sorting. Plays a role in secretory transport via regulation of DAG pool at the Golgi apparatus and its downstream effects on PRKD1. This Gallus gallus (Chicken) protein is Phosphatidylcholine:ceramide cholinephosphotransferase 1 (SGMS1).